Reading from the N-terminus, the 91-residue chain is Large ribosomal subunit protein bL27 (91 aa).

This sequence belongs to the bacterial ribosomal protein bL27 family. Part of the 50S ribosomal subunit. Contacts protein L18.

In terms of biological role, binds the 5S and 23S rRNAs and also the tRNA in the P site. The polypeptide is Large ribosomal subunit protein bL27 (rpmA) (Deinococcus radiodurans (strain ATCC 13939 / DSM 20539 / JCM 16871 / CCUG 27074 / LMG 4051 / NBRC 15346 / NCIMB 9279 / VKM B-1422 / R1)).